Here is a 393-residue protein sequence, read N- to C-terminus: NAD(P)H-quinone oxidoreductase subunit H, chloroplastic (393 aa).

It belongs to the complex I 49 kDa subunit family. In terms of assembly, NDH is composed of at least 16 different subunits, 5 of which are encoded in the nucleus.

It is found in the plastid. The protein localises to the chloroplast thylakoid membrane. It carries out the reaction a plastoquinone + NADH + (n+1) H(+)(in) = a plastoquinol + NAD(+) + n H(+)(out). The enzyme catalyses a plastoquinone + NADPH + (n+1) H(+)(in) = a plastoquinol + NADP(+) + n H(+)(out). In terms of biological role, NDH shuttles electrons from NAD(P)H:plastoquinone, via FMN and iron-sulfur (Fe-S) centers, to quinones in the photosynthetic chain and possibly in a chloroplast respiratory chain. The immediate electron acceptor for the enzyme in this species is believed to be plastoquinone. Couples the redox reaction to proton translocation, and thus conserves the redox energy in a proton gradient. This is NAD(P)H-quinone oxidoreductase subunit H, chloroplastic from Panax ginseng (Korean ginseng).